Consider the following 278-residue polypeptide: HTH-type transcriptional activator RhaS (278 aa).

In terms of domain architecture, HTH araC/xylS-type spans 174–272; sequence NLLLAWLEDH…NWSPRDIRQG (99 aa). 2 consecutive DNA-binding regions (H-T-H motif) follow at residues 191-212 and 239-262; these read DAVA…KQQT and VTDI…RREF.

In terms of assembly, binds DNA as a dimer.

It is found in the cytoplasm. Its function is as follows. Activates expression of the rhaBAD and rhaT operons. This chain is HTH-type transcriptional activator RhaS, found in Escherichia coli O81 (strain ED1a).